Reading from the N-terminus, the 845-residue chain is Protein TSD2 (845 aa).

A disordered region spans residues 193–283 (DVDSDSESDS…SASATRLTNA (91 aa)). Basic and acidic residues-rich tracts occupy residues 202-212 (SDSHSDSHSDS) and 230-242 (ARSH…DGSG). A compositionally biased stretch (basic residues) spans 243 to 272 (GKRKRGSHSPLSRRRQRHKQGQRHKPRHRS).

The protein belongs to the CDC45 family.

The protein resides in the nucleus. In terms of biological role, temperature-sensitive protein required for DNA synthesis. May be a transcription factor that regulates the level or influences the stability of DNA polymerases or auxiliary proteins. The protein is Protein TSD2 (TSD2) of Mycosarcoma maydis (Corn smut fungus).